The chain runs to 299 residues: Ribosomal protein L11 methyltransferase (299 aa).

S-adenosyl-L-methionine-binding residues include threonine 149, glycine 170, aspartate 192, and asparagine 234.

The protein belongs to the methyltransferase superfamily. PrmA family.

The protein resides in the cytoplasm. It catalyses the reaction L-lysyl-[protein] + 3 S-adenosyl-L-methionine = N(6),N(6),N(6)-trimethyl-L-lysyl-[protein] + 3 S-adenosyl-L-homocysteine + 3 H(+). In terms of biological role, methylates ribosomal protein L11. The protein is Ribosomal protein L11 methyltransferase of Chromohalobacter salexigens (strain ATCC BAA-138 / DSM 3043 / CIP 106854 / NCIMB 13768 / 1H11).